Reading from the N-terminus, the 387-residue chain is Phosphoglycerate kinase (387 aa).

Substrate is bound by residues 21-23 (DLN), R36, 59-62 (HLGR), R113, and R146. Residues K197, E314, and 340–343 (GGDT) contribute to the ATP site.

The protein belongs to the phosphoglycerate kinase family. Monomer.

It localises to the cytoplasm. It carries out the reaction (2R)-3-phosphoglycerate + ATP = (2R)-3-phospho-glyceroyl phosphate + ADP. The protein operates within carbohydrate degradation; glycolysis; pyruvate from D-glyceraldehyde 3-phosphate: step 2/5. The polypeptide is Phosphoglycerate kinase (Aeromonas hydrophila subsp. hydrophila (strain ATCC 7966 / DSM 30187 / BCRC 13018 / CCUG 14551 / JCM 1027 / KCTC 2358 / NCIMB 9240 / NCTC 8049)).